Consider the following 228-residue polypeptide: Cytochrome b6-f complex iron-sulfur subunit 1, chloroplastic (228 aa).

Residues Met-1–Met-49 constitute a chloroplast transit peptide. The helical transmembrane segment at Leu-72 to Val-92 threads the bilayer. One can recognise a Rieske domain in the interval Ala-115–Phe-211. Positions 157, 159, 175, and 178 each coordinate [2Fe-2S] cluster. A disulfide bridge connects residues Cys-162 and Cys-177.

This sequence belongs to the Rieske iron-sulfur protein family. The 4 large subunits of the cytochrome b6-f complex are cytochrome b6, subunit IV (17 kDa polypeptide, petD), cytochrome f and the Rieske protein, while the 4 small subunits are petG, petL, petM and petN. The complex functions as a dimer. The cofactor is [2Fe-2S] cluster.

It localises to the plastid. It is found in the chloroplast thylakoid membrane. It carries out the reaction 2 oxidized [plastocyanin] + a plastoquinol + 2 H(+)(in) = 2 reduced [plastocyanin] + a plastoquinone + 4 H(+)(out). Its function is as follows. Component of the cytochrome b6-f complex, which mediates electron transfer between photosystem II (PSII) and photosystem I (PSI), cyclic electron flow around PSI, and state transitions. This is Cytochrome b6-f complex iron-sulfur subunit 1, chloroplastic (petC1) from Nicotiana tabacum (Common tobacco).